Here is a 223-residue protein sequence, read N- to C-terminus: DNA mismatch repair protein MutH (223 aa).

It belongs to the MutH family.

It localises to the cytoplasm. Its function is as follows. Sequence-specific endonuclease that cleaves unmethylated GATC sequences. It is involved in DNA mismatch repair. The polypeptide is DNA mismatch repair protein MutH (Shewanella sp. (strain ANA-3)).